A 721-amino-acid polypeptide reads, in one-letter code: DNA ligase (721 aa).

NAD(+) is bound by residues 42 to 46 (DAEYD), 91 to 92 (SL), and E125. The active-site N6-AMP-lysine intermediate is K127. Residues R148, E184, K300, and K324 each coordinate NAD(+). Zn(2+) is bound by residues C430, C433, C448, and C454. Residues 642–721 (STGSPVEGKT…DAWFTLVGEE (80 aa)) enclose the BRCT domain.

It belongs to the NAD-dependent DNA ligase family. LigA subfamily. It depends on Mg(2+) as a cofactor. The cofactor is Mn(2+).

It catalyses the reaction NAD(+) + (deoxyribonucleotide)n-3'-hydroxyl + 5'-phospho-(deoxyribonucleotide)m = (deoxyribonucleotide)n+m + AMP + beta-nicotinamide D-nucleotide.. In terms of biological role, DNA ligase that catalyzes the formation of phosphodiester linkages between 5'-phosphoryl and 3'-hydroxyl groups in double-stranded DNA using NAD as a coenzyme and as the energy source for the reaction. It is essential for DNA replication and repair of damaged DNA. This chain is DNA ligase, found in Brucella anthropi (strain ATCC 49188 / DSM 6882 / CCUG 24695 / JCM 21032 / LMG 3331 / NBRC 15819 / NCTC 12168 / Alc 37) (Ochrobactrum anthropi).